The chain runs to 306 residues: Probable thioesterase atnL (306 aa).

Belongs to the lcsJ thioesterase family.

Part of the gene cluster that mediates the biosynthesis of aspercryptins, linear lipopeptides built from six amino acids including 2 highly unusual and nonproteogenic amino acids, 2-amino-octanoic acid (2aoa) and 2-amino-dodecanol (2adol). The core structure of aspercryptins is as follows: Ser/Ala-Thr-Ile/Val-2aoa-Asn-2adol. The first step of aspercryptin biosynthesis is the generation of the fatty acid precursors, octanoic and dodecanoic acids, by the FAS subunits atnF and atnM. The fatty acid precursors are likely transformed into the corresponding alpha-amino fatty acids in three steps. First, they are hydroxylated by the cytochrome P450 monooxygenase atnE, then oxidized to the corresponding alpha-keto acids by the NAD(P)-dependent oxidoreductase atnD, and finally converted to the alpha-amino fatty acids by the PLP-dependent aminotransferases atnH or atnJ. the alpha-amino fatty acids, 2-amino-octanoic and 2-amino-dodecanoic acids, are recognized, activated, and covalently tethered to the NRPS atnA by its fourth and sixth adenylation domains. The second module of atnA is the Thr module and contains an epimerase (E) domain responsible for the epimerization of Thr to D-allo-Thr. Additionally, despite atnA having only one epimerase domain, the first amino acid of aspercryptin A1 is D-Ser, suggesting that serine is either loaded directly as D-Ser on the first module or that the epimerase domain in the threonine module epimerizes both L-Ser and L-Thr. After condensation of the hexapeptide of aspercryptin, the C-terminal reductase (TE) domain might be involved in the reductive release and production of the aldehyde hexapeptide. Further reduction would generate aspercryptins. The variety of aspercryptins produced reflects the flexibility of the atnA NRPS, allowing incorporation of alanine instead of serine, valine for isoleucine, and a C10 fatty amino alcohol instead of the C12 version. AtnB seems to be involved in the selectivity for Ile versus Val by the third module. Moreover, type B, C and D aspercryptins have an additional N-terminal cichorine, acetyl and propionyl group respectively. The protein is Probable thioesterase atnL of Emericella nidulans (strain FGSC A4 / ATCC 38163 / CBS 112.46 / NRRL 194 / M139) (Aspergillus nidulans).